We begin with the raw amino-acid sequence, 369 residues long: MEFEVKKTFGKARLGVMKLHHGAVETPVFMPVGTNANVKLLTPRDLEEAGAEIILSNTFHLMLKPGVEIIKLHRGLHNFMGWKRPILTDSGGFQVFSLPKIRIDDEGVVFRSPIDGSKVFLNPEISMEVQIALGSDICMVFDHCPVPDADYEEVKEATERTYRWALRSKKAFKTENQALFGIVQGGIYPDLRRESALQLTSIGFDGYAIGGLSIGEERSLTLEMTEVTVEFLPEDKPRYFMGGGSPELILELVDRGVDMFDSVFPTRIARHGTALTWNGKLNLKASYNKRSLEPVDERCGCYTCKNFTRSYIHHLFDRGEVLGQILLTIHNINFMISLMKEVRRSIESGTFKELKSKVVEVYSSGGVNV.

Aspartate 89 acts as the Proton acceptor in catalysis. Residues 89–93, aspartate 142, glutamine 184, and glycine 211 each bind substrate; that span reads DSGGF. Positions 242-248 are RNA binding; the sequence is GGGSPEL. Aspartate 261 serves as the catalytic Nucleophile. The segment at 266-270 is RNA binding; important for wobble base 34 recognition; that stretch reads TRIAR. The Zn(2+) site is built by cysteine 299, cysteine 301, cysteine 304, and histidine 330.

It belongs to the queuine tRNA-ribosyltransferase family. In terms of assembly, homodimer. Within each dimer, one monomer is responsible for RNA recognition and catalysis, while the other monomer binds to the replacement base PreQ1. Zn(2+) is required as a cofactor.

The enzyme catalyses 7-aminomethyl-7-carbaguanine + guanosine(34) in tRNA = 7-aminomethyl-7-carbaguanosine(34) in tRNA + guanine. It functions in the pathway tRNA modification; tRNA-queuosine biosynthesis. Functionally, catalyzes the base-exchange of a guanine (G) residue with the queuine precursor 7-aminomethyl-7-deazaguanine (PreQ1) at position 34 (anticodon wobble position) in tRNAs with GU(N) anticodons (tRNA-Asp, -Asn, -His and -Tyr). Catalysis occurs through a double-displacement mechanism. The nucleophile active site attacks the C1' of nucleotide 34 to detach the guanine base from the RNA, forming a covalent enzyme-RNA intermediate. The proton acceptor active site deprotonates the incoming PreQ1, allowing a nucleophilic attack on the C1' of the ribose to form the product. After dissociation, two additional enzymatic reactions on the tRNA convert PreQ1 to queuine (Q), resulting in the hypermodified nucleoside queuosine (7-(((4,5-cis-dihydroxy-2-cyclopenten-1-yl)amino)methyl)-7-deazaguanosine). This Thermotoga sp. (strain RQ2) protein is Queuine tRNA-ribosyltransferase.